We begin with the raw amino-acid sequence, 3166 residues long: Intermembrane lipid transfer protein VPS13A (3166 aa).

In terms of domain architecture, Chorein N-terminal spans 3 to 116; it reads FESVVVEVLN…LMETKQQELK (114 aa). TPR repeat units follow at residues 212-245 and 373-406; these read LFAY…ENIV and LTSK…QQAE. Thr831 bears the Phosphothreonine mark. Ser835 carries the post-translational modification Phosphoserine. An FFAT motif is present at residues 838–844; sequence EFFDAPC. Polar residues predominate over residues 1343–1359; the sequence is APSSANKDPETMTSGVT. A disordered region spans residues 1343 to 1365; that stretch reads APSSANKDPETMTSGVTSPPDHS. Position 1410 is a phosphoserine (Ser1410). TPR repeat units lie at residues 1806–1840 and 1999–2034; these read AIVE…TLSK and ISVF…VPED. Positions 2202-2447 constitute an SHR-BD domain; the sequence is VAFHSPYWMV…VYYTWADPVG (246 aa). 2 required for mitochondrial localization regions span residues 2607–3166 and 2743–3166; these read LQPH…SPRL and EYEV…SPRL. 2 TPR repeats span residues 2716-2750 and 2852-2890; these read ADLV…VSSV and ILGL…PEEF. The required for lipid droplet localization stretch occupies residues 2945–3019; the sequence is PAGLREGITR…SSTFQGIKRA (75 aa).

The protein belongs to the VPS13 family. Interacts (via FFAT motif) with VAPA and VAPB. Interacts with RAB7A. Interacts with XK.

It localises to the mitochondrion outer membrane. Its subcellular location is the endoplasmic reticulum membrane. The protein resides in the endosome membrane. The protein localises to the lysosome membrane. It is found in the lipid droplet. It localises to the golgi apparatus. Its subcellular location is the cytoplasmic vesicle. The protein resides in the secretory vesicle. The protein localises to the neuronal dense core vesicle. Mediates the transfer of lipids between membranes at organelle contact sites. Required for the formation or stabilization of ER-mitochondria contact sites which enable transfer of lipids between the ER and mitochondria. Negatively regulates lipid droplet size and motility. Required for efficient lysosomal protein degradation. The protein is Intermembrane lipid transfer protein VPS13A of Mus musculus (Mouse).